The following is a 977-amino-acid chain: Probable UDP-N-acetylglucosamine--peptide N-acetylglucosaminyltransferase SEC (977 aa).

TPR repeat units lie at residues 2 to 35, 53 to 86, 87 to 120, 121 to 154, 155 to 188, 189 to 222, 223 to 256, 257 to 290, 291 to 324, 325 to 358, 359 to 392, 393 to 426, 427 to 460, and 461 to 494; these read ISSK…SVSS, DDAR…NPLR, TDNL…QPQF, AECY…RPNF, ADAW…NPLL, VDAH…QPTF, AIAW…KPAF, PDAY…RPNS, AMAF…DPRF, LEAY…QPNH, PQAM…TTGL, SAPF…DPLA, ADAL…RPTM, and AEAH…RPDF. Residues 495 to 977 are catalytic region; sequence PEATCNLLHT…ENDLEFPHDR (483 aa).

It belongs to the glycosyltransferase 41 family. O-GlcNAc transferase subfamily. Interacts with TCP14 and TCP15. Interacts with ATX1.

The catalysed reaction is L-seryl-[protein] + UDP-N-acetyl-alpha-D-glucosamine = 3-O-(N-acetyl-beta-D-glucosaminyl)-L-seryl-[protein] + UDP + H(+). It catalyses the reaction L-threonyl-[protein] + UDP-N-acetyl-alpha-D-glucosamine = 3-O-(N-acetyl-beta-D-glucosaminyl)-L-threonyl-[protein] + UDP + H(+). It functions in the pathway protein modification; protein glycosylation. In terms of biological role, O-linked N-acetylglucosamine transferase (OGT) that mediates O-glycosylation of capsid protein (CP) of virus in case of infection by Plum pox virus. OGTs catalyze the addition of nucleotide-activated sugars directly onto the polypeptide through O-glycosidic linkage with the hydroxyl of serine or threonine. Probably acts by adding O-linked sugars to yet unknown proteins. Its OGT activity has been proved in vitro but not in vivo. Required with SPY for gamete and seed development. Mediates O-glycosylation of the DELLA protein RGA, a repressor of the gibberellin (GA) signaling pathway. O-glycosylation by SEC inhibits RGA binding to four of its interactors PIF3, PIF4, JAZ1, and BZR1 that are key regulators in light, jasmonate, and brassinosteroid signaling pathways, respectively. Activates ATX1 through O-GlcNAc modification to augment ATX1-mediated H3K4me3 histone epigenetic modification at FLC locus, thus preventing premature flowering. The chain is Probable UDP-N-acetylglucosamine--peptide N-acetylglucosaminyltransferase SEC from Arabidopsis thaliana (Mouse-ear cress).